The following is a 41-amino-acid chain: uncharacterized protein (41 aa).

A helical transmembrane segment spans residues 8-28 (IKKIAMFFLGILVGVFIVLFF).

Its subcellular location is the membrane. This is an uncharacterized protein from Streptococcus pneumoniae serotype 2 (strain D39 / NCTC 7466).